The following is a 119-amino-acid chain: Ribonuclease P protein component (119 aa).

The protein belongs to the RnpA family. In terms of assembly, consists of a catalytic RNA component (M1 or rnpB) and a protein subunit.

The catalysed reaction is Endonucleolytic cleavage of RNA, removing 5'-extranucleotides from tRNA precursor.. RNaseP catalyzes the removal of the 5'-leader sequence from pre-tRNA to produce the mature 5'-terminus. It can also cleave other RNA substrates such as 4.5S RNA. The protein component plays an auxiliary but essential role in vivo by binding to the 5'-leader sequence and broadening the substrate specificity of the ribozyme. The polypeptide is Ribonuclease P protein component (Bacillus cereus (strain ZK / E33L)).